The sequence spans 208 residues: Small ribosomal subunit protein eS8 (208 aa).

A disordered region spans residues 1–37 (MGISRDNWHKRRKTGGKRKPYHKKRKYEPGRPAANTK). Basic residues predominate over residues 8–26 (WHKRRKTGGKRKPYHKKRK).

Belongs to the eukaryotic ribosomal protein eS8 family. Component of the small ribosomal subunit. Identified in a IGF2BP1-dependent mRNP granule complex containing untranslated mRNAs. Part of the small subunit (SSU) processome, composed of more than 70 proteins and the RNA chaperone small nucleolar RNA (snoRNA) U3.

It is found in the cytoplasm. The protein resides in the membrane. The protein localises to the nucleus. Its subcellular location is the nucleolus. In terms of biological role, component of the small ribosomal subunit. The ribosome is a large ribonucleoprotein complex responsible for the synthesis of proteins in the cell. Part of the small subunit (SSU) processome, first precursor of the small eukaryotic ribosomal subunit. During the assembly of the SSU processome in the nucleolus, many ribosome biogenesis factors, an RNA chaperone and ribosomal proteins associate with the nascent pre-rRNA and work in concert to generate RNA folding, modifications, rearrangements and cleavage as well as targeted degradation of pre-ribosomal RNA by the RNA exosome. This is Small ribosomal subunit protein eS8 (rps8) from Xenopus laevis (African clawed frog).